The chain runs to 250 residues: High affinity immunoglobulin epsilon receptor subunit alpha (250 aa).

A signal peptide spans 1-23 (MVTGRSAQLCLALLFMSLDVILT). Topologically, residues 24–204 (ATEKSVLTLD…AYKCKYYWLQ (181 aa)) are extracellular. The region spanning 28 to 104 (SVLTLDPPWI…QGLFKSKPVY (77 aa)) is the Ig-like 1 domain. A disulfide bond links cysteine 49 and cysteine 92. 6 N-linked (GlcNAc...) asparagine glycosylation sites follow: asparagine 58, asparagine 66, asparagine 73, asparagine 106, asparagine 152, and asparagine 167. Positions 114–181 (LQTSADMVLV…YHCKGYLRQV (68 aa)) constitute an Ig-like 2 domain. A disulfide bridge links cysteine 131 with cysteine 174. Residues 205–223 (LIFPLLVAILFAVDTGLLL) traverse the membrane as a helical segment. Residues 224-250 (STEEQFKSVLEIQKTGKYKKVETELLT) are Cytoplasmic-facing.

In terms of assembly, tetramer of an alpha chain, a beta chain, and two disulfide linked gamma chains. Interacts with IGHE (via CH3 region). Expressed in bone marrow mast cells, as well as in the pineal gland at night.

It localises to the cell membrane. In terms of biological role, high-affinity receptor for immunoglobulin epsilon/IgE. Mediates IgE effector functions in myeloid cells. Upon IgE binding and antigen/allergen cross-linking initiates signaling pathways that lead to myeloid cell activation and differentiation. On mast cells, basophils and eosinophils stimulates the secretion of vasoactive amines, lipid mediators and cytokines that contribute to inflammatory response, tissue remodeling and cytotoxicity against microbes. Triggers the immediate hypersensitivity response to allergens as a host defense mechanism against helminth parasites, pathogenic bacteria and venom toxicity. When dysregulated, it can elicit harmful life-threatening allergic and anaphylactic reactions. This Mus musculus (Mouse) protein is High affinity immunoglobulin epsilon receptor subunit alpha (Fcer1a).